The following is a 291-amino-acid chain: ATP synthase gamma chain (291 aa).

The protein belongs to the ATPase gamma chain family. As to quaternary structure, F-type ATPases have 2 components, CF(1) - the catalytic core - and CF(0) - the membrane proton channel. CF(1) has five subunits: alpha(3), beta(3), gamma(1), delta(1), epsilon(1). CF(0) has three main subunits: a, b and c.

Its subcellular location is the cell inner membrane. Its function is as follows. Produces ATP from ADP in the presence of a proton gradient across the membrane. The gamma chain is believed to be important in regulating ATPase activity and the flow of protons through the CF(0) complex. The polypeptide is ATP synthase gamma chain (Neisseria gonorrhoeae (strain ATCC 700825 / FA 1090)).